The primary structure comprises 202 residues: Holliday junction branch migration complex subunit RuvA (202 aa).

Positions 1-64 (MIGYLKGQIL…YDGTVLYGFL (64 aa)) are domain I. The interval 65–146 (TKEDKQLWAI…AVTIAGVPKI (82 aa)) is domain II. The segment at 147–155 (KIEGEAPFM) is flexible linker. Residues 155–202 (MSEVMMALTALGYSPMEARKAIDQLYKTGLANDSVENIIRAALRILKK) form a domain III region.

It belongs to the RuvA family. In terms of assembly, homotetramer. Forms an RuvA(8)-RuvB(12)-Holliday junction (HJ) complex. HJ DNA is sandwiched between 2 RuvA tetramers; dsDNA enters through RuvA and exits via RuvB. An RuvB hexamer assembles on each DNA strand where it exits the tetramer. Each RuvB hexamer is contacted by two RuvA subunits (via domain III) on 2 adjacent RuvB subunits; this complex drives branch migration. In the full resolvosome a probable DNA-RuvA(4)-RuvB(12)-RuvC(2) complex forms which resolves the HJ.

It is found in the cytoplasm. The RuvA-RuvB-RuvC complex processes Holliday junction (HJ) DNA during genetic recombination and DNA repair, while the RuvA-RuvB complex plays an important role in the rescue of blocked DNA replication forks via replication fork reversal (RFR). RuvA specifically binds to HJ cruciform DNA, conferring on it an open structure. The RuvB hexamer acts as an ATP-dependent pump, pulling dsDNA into and through the RuvAB complex. HJ branch migration allows RuvC to scan DNA until it finds its consensus sequence, where it cleaves and resolves the cruciform DNA. This chain is Holliday junction branch migration complex subunit RuvA, found in Elusimicrobium minutum (strain Pei191).